A 160-amino-acid chain; its full sequence is Cytochrome b6-f complex subunit 4 (160 aa).

The next 3 membrane-spanning stretches (helical) occupy residues 36 to 56 (LLYI…GLAV), 95 to 115 (LLGV…PFLE), and 131 to 151 (TVFL…TLPI).

This sequence belongs to the cytochrome b family. PetD subfamily. In terms of assembly, the 4 large subunits of the cytochrome b6-f complex are cytochrome b6, subunit IV (17 kDa polypeptide, petD), cytochrome f and the Rieske protein, while the 4 small subunits are petG, petL, petM and petN. The complex functions as a dimer.

It localises to the plastid. It is found in the chloroplast thylakoid membrane. Its function is as follows. Component of the cytochrome b6-f complex, which mediates electron transfer between photosystem II (PSII) and photosystem I (PSI), cyclic electron flow around PSI, and state transitions. This Pisum sativum (Garden pea) protein is Cytochrome b6-f complex subunit 4.